A 210-amino-acid polypeptide reads, in one-letter code: Urease accessory protein UreG (210 aa).

15–22 (GPVGSGKT) provides a ligand contact to GTP.

The protein belongs to the SIMIBI class G3E GTPase family. UreG subfamily. Homodimer. UreD, UreF and UreG form a complex that acts as a GTP-hydrolysis-dependent molecular chaperone, activating the urease apoprotein by helping to assemble the nickel containing metallocenter of UreC. The UreE protein probably delivers the nickel.

It localises to the cytoplasm. Facilitates the functional incorporation of the urease nickel metallocenter. This process requires GTP hydrolysis, probably effectuated by UreG. The protein is Urease accessory protein UreG of Ralstonia nicotianae (strain ATCC BAA-1114 / GMI1000) (Ralstonia solanacearum).